Reading from the N-terminus, the 200-residue chain is MHLPLEARMKREPRFLPPLQSVIYGYTRRMLDQTAMNAQSFAMVLAEKYLSLTAPDVRGVALRIGDDVAEDMRNNAQVLRRYMDGTVKTLPADLVDAWMLALPEPYRGECERDLARRRGVLPVRLPTANPAARVVGVAELVSEFAQLLEVIAPALADGRIDTNDLPFARRILDESDDVIAAVLGIRGQVQAMFQQENTDA.

This is an uncharacterized protein from Xylella fastidiosa (strain 9a5c).